A 70-amino-acid chain; its full sequence is UPF0434 protein MCA0634 (70 aa).

Belongs to the UPF0434 family.

This is UPF0434 protein MCA0634 from Methylococcus capsulatus (strain ATCC 33009 / NCIMB 11132 / Bath).